The sequence spans 147 residues: UPF0178 protein Nther_1836 (147 aa).

The protein belongs to the UPF0178 family.

The protein is UPF0178 protein Nther_1836 of Natranaerobius thermophilus (strain ATCC BAA-1301 / DSM 18059 / JW/NM-WN-LF).